The following is a 348-amino-acid chain: Holliday junction branch migration complex subunit RuvB (348 aa).

A large ATPase domain (RuvB-L) region spans residues 4–184 (ADRLIAASGR…FGIVQRLEFY (181 aa)). ATP is bound by residues Ile-23, Arg-24, Gly-65, Lys-68, Thr-69, Thr-70, 131–133 (EDF), Arg-174, Tyr-184, and Arg-221. Thr-69 contacts Mg(2+). The segment at 185–255 (NDKDLSTIVS…VADMALNLLD (71 aa)) is small ATPAse domain (RuvB-S). Residues 258–348 (ERGFDHSDRR…GGDFSEPGDE (91 aa)) form a head domain (RuvB-H) region. 3 residues coordinate DNA: Arg-294, Arg-313, and Arg-318.

This sequence belongs to the RuvB family. As to quaternary structure, homohexamer. Forms an RuvA(8)-RuvB(12)-Holliday junction (HJ) complex. HJ DNA is sandwiched between 2 RuvA tetramers; dsDNA enters through RuvA and exits via RuvB. An RuvB hexamer assembles on each DNA strand where it exits the tetramer. Each RuvB hexamer is contacted by two RuvA subunits (via domain III) on 2 adjacent RuvB subunits; this complex drives branch migration. In the full resolvosome a probable DNA-RuvA(4)-RuvB(12)-RuvC(2) complex forms which resolves the HJ.

The protein resides in the cytoplasm. The catalysed reaction is ATP + H2O = ADP + phosphate + H(+). Functionally, the RuvA-RuvB-RuvC complex processes Holliday junction (HJ) DNA during genetic recombination and DNA repair, while the RuvA-RuvB complex plays an important role in the rescue of blocked DNA replication forks via replication fork reversal (RFR). RuvA specifically binds to HJ cruciform DNA, conferring on it an open structure. The RuvB hexamer acts as an ATP-dependent pump, pulling dsDNA into and through the RuvAB complex. RuvB forms 2 homohexamers on either side of HJ DNA bound by 1 or 2 RuvA tetramers; 4 subunits per hexamer contact DNA at a time. Coordinated motions by a converter formed by DNA-disengaged RuvB subunits stimulates ATP hydrolysis and nucleotide exchange. Immobilization of the converter enables RuvB to convert the ATP-contained energy into a lever motion, pulling 2 nucleotides of DNA out of the RuvA tetramer per ATP hydrolyzed, thus driving DNA branch migration. The RuvB motors rotate together with the DNA substrate, which together with the progressing nucleotide cycle form the mechanistic basis for DNA recombination by continuous HJ branch migration. Branch migration allows RuvC to scan DNA until it finds its consensus sequence, where it cleaves and resolves cruciform DNA. The chain is Holliday junction branch migration complex subunit RuvB from Pseudomonas putida (strain ATCC 47054 / DSM 6125 / CFBP 8728 / NCIMB 11950 / KT2440).